Here is a 693-residue protein sequence, read N- to C-terminus: Polyribonucleotide nucleotidyltransferase (693 aa).

Positions 489 and 495 each coordinate Mg(2+). In terms of domain architecture, KH spans 556–615 (PQIHVMNINPAKIKDVVGRGGATVKGIVEKTGAQIDTSDSGEVKVFAKDKKSMDMAVAMI). Residues 625 to 693 (GQVYKGKIVK…GRVKLSLVAR (69 aa)) enclose the S1 motif domain.

The protein belongs to the polyribonucleotide nucleotidyltransferase family. As to quaternary structure, component of the RNA degradosome, which is a multiprotein complex involved in RNA processing and mRNA degradation. It depends on Mg(2+) as a cofactor.

Its subcellular location is the cytoplasm. The enzyme catalyses RNA(n+1) + phosphate = RNA(n) + a ribonucleoside 5'-diphosphate. In terms of biological role, involved in mRNA degradation. Catalyzes the phosphorolysis of single-stranded polyribonucleotides processively in the 3'- to 5'-direction. The protein is Polyribonucleotide nucleotidyltransferase of Francisella tularensis subsp. tularensis (strain WY96-3418).